Here is a 106-residue protein sequence, read N- to C-terminus: uncharacterized protein (106 aa).

This is an uncharacterized protein from Homo sapiens (Human).